The chain runs to 111 residues: uncharacterized protein (111 aa).

The chain crosses the membrane as a helical span at residues 48–70 (LFLVPFPASFTRWLTFLFHLVIY).

It localises to the membrane. This is an uncharacterized protein from Saccharomyces cerevisiae (strain ATCC 204508 / S288c) (Baker's yeast).